The sequence spans 337 residues: Anthranilate phosphoribosyltransferase (337 aa).

5-phospho-alpha-D-ribose 1-diphosphate-binding positions include Gly80, 83 to 84, Thr88, 90 to 93, 108 to 116, and Ser120; these read GD, NIST, and KHGNRSVSS. Gly80 contributes to the anthranilate binding site. Position 92 (Ser92) interacts with Mg(2+). Asn111 serves as a coordination point for anthranilate. Anthranilate is bound at residue Arg166. Mg(2+) contacts are provided by Asp225 and Glu226.

Belongs to the anthranilate phosphoribosyltransferase family. Homodimer. The cofactor is Mg(2+).

The enzyme catalyses N-(5-phospho-beta-D-ribosyl)anthranilate + diphosphate = 5-phospho-alpha-D-ribose 1-diphosphate + anthranilate. The protein operates within amino-acid biosynthesis; L-tryptophan biosynthesis; L-tryptophan from chorismate: step 2/5. Its function is as follows. Catalyzes the transfer of the phosphoribosyl group of 5-phosphorylribose-1-pyrophosphate (PRPP) to anthranilate to yield N-(5'-phosphoribosyl)-anthranilate (PRA). The sequence is that of Anthranilate phosphoribosyltransferase from Syntrophobacter fumaroxidans (strain DSM 10017 / MPOB).